Consider the following 334-residue polypeptide: Catabolite repressor/activator (334 aa).

The HTH lacI-type domain maps to 1–58 (MKLDEIARLAGVSRTTASYVINGKAKQYRVSDKTVEKVMAVVREHNYHPNAVAAGLRA). The H-T-H motif DNA-binding region spans 3-22 (LDEIARLAGVSRTTASYVIN).

As to quaternary structure, homotetramer.

In terms of biological role, global transcriptional regulator, which plays an important role in the regulation of carbon metabolism. This Salmonella typhimurium (strain LT2 / SGSC1412 / ATCC 700720) protein is Catabolite repressor/activator (cra).